A 184-amino-acid polypeptide reads, in one-letter code: Large ribosomal subunit protein bL9 (184 aa).

The disordered stretch occupies residues 160–184; it reads LQNQKSEQQEAEQDANKEAADGDDS. Positions 173–184 are enriched in basic and acidic residues; it reads DANKEAADGDDS.

Belongs to the bacterial ribosomal protein bL9 family.

Its function is as follows. Binds to the 23S rRNA. In Wolbachia sp. subsp. Drosophila simulans (strain wRi), this protein is Large ribosomal subunit protein bL9.